Reading from the N-terminus, the 344-residue chain is Fructose-1,6-bisphosphatase class 1 (344 aa).

Mg(2+) is bound by residues Glu92, Asp115, Leu117, and Asp118. Substrate is bound by residues 118–121 (DGSS), Asn211, Tyr244, and Lys274. Glu280 contributes to the Mg(2+) binding site.

This sequence belongs to the FBPase class 1 family. In terms of assembly, homotetramer. Requires Mg(2+) as cofactor.

Its subcellular location is the cytoplasm. The enzyme catalyses beta-D-fructose 1,6-bisphosphate + H2O = beta-D-fructose 6-phosphate + phosphate. Its pathway is carbohydrate biosynthesis; gluconeogenesis. The sequence is that of Fructose-1,6-bisphosphatase class 1 from Aeromonas salmonicida (strain A449).